Here is a 226-residue protein sequence, read N- to C-terminus: Xanthocillin biosynthesis cluster protein F (226 aa).

The protein operates within secondary metabolite biosynthesis. In terms of biological role, part of the gene cluster that mediates the biosynthesis of the isocyanide xanthocillin and its derivatives. The first step of the pathway consists in the conversion of tyrosine into a vinyl-isonitrile intermediate by the isocyanide synthase xanB. Subsequent oxidative dimerization of this intermediate to form xanthocillin may involve the cytochrome P450 monooxygenase xanG, whose expression is coregulated with that of XanB. Xanthocillin can be further modified by the isonitrile hydratase-like protein xanA which introduces N-formyl groups and the methyltransferase xanE which introduces methyl groups, leading to the production of several derivatives including fumiformamide. Finally, fumiformamide can be subject to both oxidative and reductive cyclization to yield melanocins E and F, respectively. In Aspergillus fumigatus (strain ATCC MYA-4609 / CBS 101355 / FGSC A1100 / Af293) (Neosartorya fumigata), this protein is Xanthocillin biosynthesis cluster protein F.